A 179-amino-acid chain; its full sequence is Probable RNA 2'-phosphotransferase (179 aa).

The protein belongs to the KptA/TPT1 family.

In terms of biological role, removes the 2'-phosphate from RNA via an intermediate in which the phosphate is ADP-ribosylated by NAD followed by a presumed transesterification to release the RNA and generate ADP-ribose 1''-2''-cyclic phosphate (APPR&gt;P). May function as an ADP-ribosylase. This is Probable RNA 2'-phosphotransferase from Fusobacterium nucleatum subsp. nucleatum (strain ATCC 25586 / DSM 15643 / BCRC 10681 / CIP 101130 / JCM 8532 / KCTC 2640 / LMG 13131 / VPI 4355).